The following is a 236-amino-acid chain: Ribonuclease 3 (236 aa).

The RNase III domain maps to 6–140; the sequence is FLDFLKQNRI…FIGAVAQDQG (135 aa). Glu46 contacts Mg(2+). Asp50 is an active-site residue. Mg(2+)-binding residues include Asp126 and Glu129. Residue Glu129 is part of the active site. One can recognise a DRBM domain in the interval 166-231; it reads DYKTIFQEQA…AKNAILKLDD (66 aa).

Belongs to the ribonuclease III family. In terms of assembly, homodimer. The cofactor is Mg(2+).

It is found in the cytoplasm. It catalyses the reaction Endonucleolytic cleavage to 5'-phosphomonoester.. Its function is as follows. Digests double-stranded RNA. Involved in the processing of primary rRNA transcript to yield the immediate precursors to the large and small rRNAs (23S and 16S). Processes some mRNAs, and tRNAs when they are encoded in the rRNA operon. Processes pre-crRNA and tracrRNA of type II CRISPR loci if present in the organism. The polypeptide is Ribonuclease 3 (Ureaplasma parvum serovar 3 (strain ATCC 700970)).